The chain runs to 633 residues: Cyclic GMP-AMP synthase-like receptor 1 (633 aa).

3 disordered regions span residues 23–80, 107–214, and 250–276; these read KVHG…HPHT, FKGP…TDPF, and REDDKSDQEKRDSWKRREGSVDDRPSS. Residues 29-67 show a composition bias toward basic and acidic residues; it reads KQHESAHPPRERHTERTATKRSDETKTASRPTASHEGKT. Positions 68-80 are enriched in polar residues; that stretch reads HTTNPRGQVHPHT. Composition is skewed to basic and acidic residues over residues 125–143, 176–194, and 250–274; these read RKPETPKKPHSATKDDHRT, RKPDTPKKPHSATKDDHRT, and REDDKSDQEKRDSWKRREGSVDDRP. 3 residues coordinate Mg(2+): glutamate 353, aspartate 355, and aspartate 455.

This sequence belongs to the mab-21 family. The cofactor is Mg(2+). It depends on Mn(2+) as a cofactor.

The enzyme catalyses UTP + ATP = 2',3'-cUAMP + 2 diphosphate. Nucleotidyltransferase that catalyzes the formation of cyclic UMP-AMP (2',3'-cUAMP) from ATP and UTP and plays a key role in innate immunity. Acts as a key sensor of double-stranded DNA (dsDNA), the presence of dsDNA in the cytoplasm being a danger signal that triggers the immune responses. Directly binds dsDNA, activating the nucleotidyltransferase activity, leading to synthesis of 2',3'-cUAMP, a second messenger that binds to and activates Sting, thereby triggering the immune response via activation of the NF-kappa-B transcription factor. The chain is Cyclic GMP-AMP synthase-like receptor 1 from Crassostrea virginica (Eastern oyster).